Consider the following 244-residue polypeptide: 5-oxoprolinase subunit A (244 aa).

The protein belongs to the LamB/PxpA family. Forms a complex composed of PxpA, PxpB and PxpC.

It catalyses the reaction 5-oxo-L-proline + ATP + 2 H2O = L-glutamate + ADP + phosphate + H(+). Functionally, catalyzes the cleavage of 5-oxoproline to form L-glutamate coupled to the hydrolysis of ATP to ADP and inorganic phosphate. The sequence is that of 5-oxoprolinase subunit A from Escherichia fergusonii (strain ATCC 35469 / DSM 13698 / CCUG 18766 / IAM 14443 / JCM 21226 / LMG 7866 / NBRC 102419 / NCTC 12128 / CDC 0568-73).